Reading from the N-terminus, the 554-residue chain is Solute carrier family 22 member 1 (554 aa).

Residues 1-21 (MPTVDDVLEQVGEFGWFQKRT) lie on the Cytoplasmic side of the membrane. Residues 22-42 (FLFLCLISAILAPIYLGIVFL) form a helical membrane-spanning segment. Over 43-149 (GFTPDHRCRS…LVCADAWKVD (107 aa)) the chain is Extracellular. Residue N71 is glycosylated (N-linked (GlcNAc...) asparagine). Residues 150 to 170 (LFQSCVNLGFFLGSLGVGYIA) traverse the membrane as a helical segment. Residues 171-176 (DRFGRK) are Cytoplasmic-facing. The chain crosses the membrane as a helical span at residues 177–197 (LCLLLTTLINAVSGVLTAVAP). Topologically, residues 198 to 206 (DYTSMLLFR) are extracellular. Residues 207–229 (LLQGLVSKGSWMSGYTLITEFVG) form a helical membrane-spanning segment. Over 230–237 (SGYRRTVA) the chain is Cytoplasmic. Residues 238 to 258 (ILYQVAFSVGLVALSGVAYAI) form a helical membrane-spanning segment. Residues 259–262 (PNWR) lie on the Extracellular side of the membrane. Residues 263–283 (WLQLTVSLPTFLCLFYYWCVP) form a helical membrane-spanning segment. Residues 283–287 (PESPR) carry the Proline-rich sequence motif. At 284–347 (ESPRWLLSQK…FRTPNLRKHT (64 aa)) the chain is on the cytoplasmic side. S333 carries the post-translational modification Phosphoserine. The helical transmembrane segment at 348–368 (FILMFLWFTCSVLYQGLILHM) threads the bilayer. The Extracellular segment spans residues 369-374 (GATGGN). The chain crosses the membrane as a helical span at residues 375-395 (VYLDFFYSSLVEFPAAFVILV). At 396–402 (TIDRVGR) the chain is on the cytoplasmic side. The helical transmembrane segment at 403-423 (IYPMAASNLAAGVASVILIFV) threads the bilayer. At 424-431 (PQDLHWLT) the chain is on the extracellular side. Residues 432–452 (IVLSCVGRMGATIVLQMICLV) traverse the membrane as a helical segment. Residues 453–464 (NAELYPTFVRNL) lie on the Cytoplasmic side of the membrane. The chain crosses the membrane as a helical span at residues 465–485 (GVMVCSALCDVGGIITPFMVF). At 486–492 (RLMEVWQ) the chain is on the extracellular side. Residues 493–513 (PLPLIVFGVLGLLAGGMTLLL) traverse the membrane as a helical segment. The Cytoplasmic portion of the chain corresponds to 514 to 554 (PETKGVALPETIEDAENLRRKAKPKESKIYLQVQTSELKGP).

Belongs to the major facilitator (TC 2.A.1) superfamily. Organic cation transporter (TC 2.A.1.19) family. In terms of processing, phosphorylated. In terms of tissue distribution, expressed in kidney, liver and intestine.

The protein resides in the basolateral cell membrane. The protein localises to the apical cell membrane. Its subcellular location is the lateral cell membrane. It localises to the basal cell membrane. It catalyses the reaction 1-methylnicotinamide(out) = 1-methylnicotinamide(in). The catalysed reaction is dopamine(out) = dopamine(in). It carries out the reaction serotonin(out) = serotonin(in). The enzyme catalyses (R)-adrenaline(out) = (R)-adrenaline(in). It catalyses the reaction (R)-noradrenaline(out) = (R)-noradrenaline(in). The catalysed reaction is histamine(out) = histamine(in). It carries out the reaction guanidine(out) = guanidine(in). The enzyme catalyses choline(out) = choline(in). It catalyses the reaction acetylcholine(in) = acetylcholine(out). The catalysed reaction is thiamine(in) = thiamine(out). It carries out the reaction spermidine(in) = spermidine(out). The enzyme catalyses agmatine(out) = agmatine(in). It catalyses the reaction putrescine(out) = putrescine(in). The catalysed reaction is (R)-carnitine(in) = (R)-carnitine(out). It carries out the reaction O-isobutanoyl-(R)-carnitine(in) = O-isobutanoyl-(R)-carnitine(out). The enzyme catalyses O-acetyl-(R)-carnitine(in) = O-acetyl-(R)-carnitine(out). It catalyses the reaction O-3-hydroxybutanoyl-(R)-carnitine(in) = O-3-hydroxybutanoyl-(R)-carnitine(out). The catalysed reaction is O-propanoyl-(R)-carnitine(in) = O-propanoyl-(R)-carnitine(out). It carries out the reaction O-butanoyl-(R)-carnitine(in) = O-butanoyl-(R)-carnitine(out). The enzyme catalyses O-2-methylbutanoyl-(R)-carnitine(in) = O-2-methylbutanoyl-(R)-carnitine(out). It catalyses the reaction O-3-methylbutanoyl-(R)-carnitine(in) = O-3-methylbutanoyl-(R)-carnitine(out). The catalysed reaction is O-hexanoyl-(R)-carnitine(in) = O-hexanoyl-(R)-carnitine(out). It carries out the reaction L-histidyl-L-proline diketopiperazine(in) = L-histidyl-L-proline diketopiperazine(out). The enzyme catalyses (R)-salsolinol(in) = (R)-salsolinol(out). It catalyses the reaction prostaglandin F2alpha(out) = prostaglandin F2alpha(in). The catalysed reaction is prostaglandin E2(out) = prostaglandin E2(in). Phosphorylation of the transporter leads to changes in its substrate affinity, resulting in a regulation of the transport activity. In contrast with rat ortholog, ASP uptake is inhibited by protein kinase A (PKA) and C (PKC) activation. ASP uptake is also endogenously activated by calmodulin, the calmodulin-dependent kinase II and LCK tyrosine kinase. Inhibited by cGMP, most likely through a cGMP-binding protein that interacts with OCT1. In terms of biological role, electrogenic voltage-dependent transporter that mediates the transport of a variety of organic cations such as endogenous bioactive amines, cationic drugs and xenobiotics. Functions as a pH- and Na(+)-independent, bidirectional transporter. Cation cellular uptake or release is driven by the electrochemical potential (i.e. membrane potential and concentration gradient) and substrate selectivity. Hydrophobicity is a major requirement for recognition in polyvalent substrates and inhibitors. Primarily expressed in the basolateral membrane of hepatocytes and proximal tubules and involved in the uptake and disposition of cationic compounds from the blood by hepatic and renal clearance. Most likely functions as an uptake carrier in enterocytes contributing to the intestinal elimination of organic cations from the systemic circulation. Transports endogenous monoamines such as N-1-methylnicotinamide (NMN), guanidine, neurotransmitters dopamine, serotonin, noradrenaline, adrenaline and histamine, and quaternary ammonium compound such as choline. Also transports natural polyamines such as spermidine, agmatine and putrescine at low affinity, but relatively high turnover. Involved in the hepatic and intestinal uptake of the vitamin B1/thiamine, hence regulating hepatic lipid and energy metabolism. Contributes to the influx and efflux of fatty acid carriers carnitines and acylcarnitines across the basolateral membrane of hepatocytes, from the liver to the systemic circulation and inversely and may be involved in regulating the systemic availability of hepatic acylcarnitines. Also capable of transporting non-amine endogenous compounds such as prostaglandin E2 (PGE2) and prostaglandin F2-alpha (PGF2-alpha). May contribute to the transport of cationic compounds in testes across the blood-testis-barrier. Also mediates the uptake of xenobiotics tributylmethylammonium (TBuMA), quinidine, N-methyl-quinine (NMQ), N-methyl-quinidine (NMQD) N-(4,4-azo-n-pentyl)-quinuclidine (APQ), azidoprocainamide methoiodide (AMP), N-(4,4-azo-n-pentyl)-21-deoxyajmalinium (APDA) and 4-(4-(dimethylamino)styryl)-N-methylpyridinium (ASP). This Oryctolagus cuniculus (Rabbit) protein is Solute carrier family 22 member 1 (SLC22A1).